Here is a 245-residue protein sequence, read N- to C-terminus: Biosynthetic peptidoglycan transglycosylase (245 aa).

Residues 24–44 (LVVIGAWLAGILLFSFLPVPF) form a helical membrane-spanning segment.

This sequence belongs to the glycosyltransferase 51 family.

The protein resides in the cell inner membrane. It carries out the reaction [GlcNAc-(1-&gt;4)-Mur2Ac(oyl-L-Ala-gamma-D-Glu-L-Lys-D-Ala-D-Ala)](n)-di-trans,octa-cis-undecaprenyl diphosphate + beta-D-GlcNAc-(1-&gt;4)-Mur2Ac(oyl-L-Ala-gamma-D-Glu-L-Lys-D-Ala-D-Ala)-di-trans,octa-cis-undecaprenyl diphosphate = [GlcNAc-(1-&gt;4)-Mur2Ac(oyl-L-Ala-gamma-D-Glu-L-Lys-D-Ala-D-Ala)](n+1)-di-trans,octa-cis-undecaprenyl diphosphate + di-trans,octa-cis-undecaprenyl diphosphate + H(+). Its pathway is cell wall biogenesis; peptidoglycan biosynthesis. In terms of biological role, peptidoglycan polymerase that catalyzes glycan chain elongation from lipid-linked precursors. The chain is Biosynthetic peptidoglycan transglycosylase from Pectobacterium atrosepticum (strain SCRI 1043 / ATCC BAA-672) (Erwinia carotovora subsp. atroseptica).